A 227-amino-acid polypeptide reads, in one-letter code: Phosphoglycolate phosphatase (227 aa).

Residue D14 is the Nucleophile of the active site. D14, D16, and D177 together coordinate Mg(2+).

This sequence belongs to the HAD-like hydrolase superfamily. CbbY/CbbZ/Gph/YieH family. It depends on Mg(2+) as a cofactor.

The catalysed reaction is 2-phosphoglycolate + H2O = glycolate + phosphate. The protein operates within organic acid metabolism; glycolate biosynthesis; glycolate from 2-phosphoglycolate: step 1/1. Specifically catalyzes the dephosphorylation of 2-phosphoglycolate. Is involved in the dissimilation of the intracellular 2-phosphoglycolate formed during the DNA repair of 3'-phosphoglycolate ends, a major class of DNA lesions induced by oxidative stress. In Thiobacillus denitrificans (strain ATCC 25259 / T1), this protein is Phosphoglycolate phosphatase.